We begin with the raw amino-acid sequence, 199 residues long: Prolactin (199 aa).

Cys4 and Cys11 are disulfide-bonded. Phosphoserine occurs at positions 26, 34, and 90. Cystine bridges form between Cys58/Cys174 and Cys191/Cys199.

It belongs to the somatotropin/prolactin family. In terms of assembly, interacts with PRLR.

The protein localises to the secreted. In terms of biological role, prolactin acts primarily on the mammary gland by promoting lactation. The sequence is that of Prolactin (PRL) from Loxodonta africana (African elephant).